The primary structure comprises 494 residues: Ketol-acid reductoisomerase (NADP(+)) (494 aa).

Residues 14–208 (LDQLGRCRFM…GGHRAGCLES (195 aa)) enclose the KARI N-terminal Rossmann domain. Residues 45–48 (CGAQ), arginine 68, arginine 76, serine 78, and 108–110 (DKQ) each bind NADP(+). Histidine 132 is a catalytic residue. Glycine 158 contacts NADP(+). KARI C-terminal knotted domains lie at 209 to 344 (SFVA…NYPD) and 345 to 487 (SSLE…MTDM). Positions 217, 221, 389, and 393 each coordinate Mg(2+). Serine 414 is a substrate binding site.

The protein belongs to the ketol-acid reductoisomerase family. Requires Mg(2+) as cofactor.

It catalyses the reaction (2R)-2,3-dihydroxy-3-methylbutanoate + NADP(+) = (2S)-2-acetolactate + NADPH + H(+). It carries out the reaction (2R,3R)-2,3-dihydroxy-3-methylpentanoate + NADP(+) = (S)-2-ethyl-2-hydroxy-3-oxobutanoate + NADPH + H(+). Its pathway is amino-acid biosynthesis; L-isoleucine biosynthesis; L-isoleucine from 2-oxobutanoate: step 2/4. The protein operates within amino-acid biosynthesis; L-valine biosynthesis; L-valine from pyruvate: step 2/4. In terms of biological role, involved in the biosynthesis of branched-chain amino acids (BCAA). Catalyzes an alkyl-migration followed by a ketol-acid reduction of (S)-2-acetolactate (S2AL) to yield (R)-2,3-dihydroxy-isovalerate. In the isomerase reaction, S2AL is rearranged via a Mg-dependent methyl migration to produce 3-hydroxy-3-methyl-2-ketobutyrate (HMKB). In the reductase reaction, this 2-ketoacid undergoes a metal-dependent reduction by NADPH to yield (R)-2,3-dihydroxy-isovalerate. The chain is Ketol-acid reductoisomerase (NADP(+)) from Aliivibrio salmonicida (strain LFI1238) (Vibrio salmonicida (strain LFI1238)).